A 376-amino-acid polypeptide reads, in one-letter code: PqqA peptide cyclase (376 aa).

A Radical SAM core domain is found at 4 to 219 (VPPPLSVLLE…VETARRSLGD (216 aa)). Residues cysteine 18, cysteine 22, and cysteine 25 each coordinate [4Fe-4S] cluster.

It belongs to the radical SAM superfamily. PqqE family. In terms of assembly, interacts with PqqD. The interaction is necessary for activity of PqqE. It depends on [4Fe-4S] cluster as a cofactor.

The catalysed reaction is [PQQ precursor protein] + S-adenosyl-L-methionine = E-Y cross-linked-[PQQ precursor protein] + 5'-deoxyadenosine + L-methionine + H(+). Its pathway is cofactor biosynthesis; pyrroloquinoline quinone biosynthesis. Functionally, catalyzes the cross-linking of a glutamate residue and a tyrosine residue in the PqqA protein as part of the biosynthesis of pyrroloquinoline quinone (PQQ). In Xanthomonas campestris pv. campestris (strain 8004), this protein is PqqA peptide cyclase.